We begin with the raw amino-acid sequence, 472 residues long: Cell division protein FtsP (472 aa).

Positions 1 to 27 form a signal peptide, tat-type signal; the sequence is MSLSRRQFIQASGIALCAGAMPLTARA.

The protein belongs to the FtsP family. Post-translationally, predicted to be exported by the Tat system. The position of the signal peptide cleavage has not been experimentally proven.

Its subcellular location is the periplasm. Its function is as follows. Cell division protein that is required for growth during stress conditions. May be involved in protecting or stabilizing the divisomal assembly under conditions of stress. This is Cell division protein FtsP from Dickeya dadantii (strain 3937) (Erwinia chrysanthemi (strain 3937)).